A 471-amino-acid chain; its full sequence is Reticulon-2 (471 aa).

Disordered stretches follow at residues 1-137 (MGQV…ERPL), 153-181 (SAGS…ASEA), and 205-234 (QLSP…DDEP). A compositionally biased stretch (low complexity) spans 14 to 25 (APSTASSTPDST). Residues 32-43 (SDFRELHTAREF) show a composition bias toward basic and acidic residues. Serine 44 bears the Phosphoserine mark. 2 stretches are compositionally biased toward polar residues: residues 100-118 (PQQS…LSQS) and 159-168 (DSATSSSTPL). The segment covering 169–181 (ENEEPDGLEASEA) has biased composition (acidic residues). Positions 205 to 229 (QLSPSSGTPQAHTPSPQRSQDSNSG) are enriched in polar residues. Serine 226 and serine 228 each carry phosphoserine. The region spanning 272 to 471 (VADLLYWKDT…SVSGSKAKAE (200 aa)) is the Reticulon domain. The next 2 membrane-spanning stretches (helical) occupy residues 295–315 (LLCL…LLGL) and 390–410 (LLFY…LVIL).

Interacts with SPAST. Interacts with BACE1. Interacts (via first transmembrane domain) with ARL6IP5/GTRAP3-18. Interacts (via N-terminus) with SLC1A1/EAAC1; the interaction promotes cell surface expression of SLC1A1. As to expression, detected in skeletal and cardiac muscle (at protein level). Expressed predominantly in neural and muscular tissues.

It is found in the endoplasmic reticulum membrane. The protein resides in the sarcoplasmic reticulum membrane. Its subcellular location is the cell membrane. It localises to the sarcolemma. The protein localises to the T-tubule. It is found in the cytoplasm. The protein resides in the myofibril. Its subcellular location is the sarcomere. It localises to the z line. The protein localises to the cytoskeleton. In terms of biological role, inhibits amyloid precursor protein processing, probably by blocking BACE1 activity. Enhances trafficking of the glutamate transporter SLC1A1/EAAC1 from the endoplasmic reticulum to the cell surface. Plays a role in the translocation of SLC2A4/GLUT4 from intracellular membranes to the cell membrane which facilitates the uptake of glucose into the cell. The sequence is that of Reticulon-2 from Mus musculus (Mouse).